We begin with the raw amino-acid sequence, 722 residues long: Protein HAPLESS 2-A (722 aa).

Residues 1-24 (MPRRRGTPLPTILLLLAFVGGACG) form the signal peptide. The Extracellular segment spans residues 25 to 552 (TEILSKSRLE…LFDFGCHIQY (528 aa)). Cystine bridges form between Cys-36–Cys-48, Cys-129–Cys-159, Cys-141–Cys-188, Cys-160–Cys-315, Cys-162–Cys-171, Cys-298–Cys-322, and Cys-435–Cys-473. Residues 553–573 (VCIGWILLLLLIPAAVVFLWL) traverse the membrane as a helical segment. Residues 574 to 722 (LHQEGLFDPL…HRDGHYSPSV (149 aa)) are Cytoplasmic-facing. Over residues 598–641 (RRRHQKGRHHRHHHDHRHRHGHSHGDHHHHYHGGHHQRRRHHHP) the composition is skewed to basic residues. Disordered regions lie at residues 598-665 (RRRH…RNHH) and 680-722 (RLDR…SPSV). Basic and acidic residues predominate over residues 646-662 (VEGHHHDRQQHSHEAGR). Over residues 701 to 711 (RRSRHERHGGH) the composition is skewed to basic residues. Positions 712–722 (GHRDGHYSPSV) are enriched in basic and acidic residues.

This sequence belongs to the HAP2/GCS1 family.

The protein localises to the endoplasmic reticulum membrane. It is found in the cell membrane. Its function is as follows. Required for male fertility. Plays a role in pollen tube guidance and successful gamete attachment. Essential for the fusion of gametes during double fertilization, where one male gamete fuses with the egg to produce a zygote, and another male gamete fuses with the central cell to produce the endosperm. Mediates the fusion of cell membranes. Not required for pollen tube outgrowth. This chain is Protein HAPLESS 2-A (HAP2A), found in Oryza sativa subsp. japonica (Rice).